A 486-amino-acid polypeptide reads, in one-letter code: Malonate-semialdehyde dehydrogenase 2 (486 aa).

Phe154, Lys178, Glu181, Arg182, and Ser231 together coordinate NAD(+). Catalysis depends on Cys286, which acts as the Nucleophile. Glu386 serves as a coordination point for NAD(+).

It belongs to the aldehyde dehydrogenase family. IolA subfamily. In terms of assembly, homotetramer.

It catalyses the reaction 3-oxopropanoate + NAD(+) + CoA + H2O = hydrogencarbonate + acetyl-CoA + NADH + H(+). The catalysed reaction is 2-methyl-3-oxopropanoate + NAD(+) + CoA + H2O = propanoyl-CoA + hydrogencarbonate + NADH + H(+). The protein operates within polyol metabolism; myo-inositol degradation into acetyl-CoA; acetyl-CoA from myo-inositol: step 7/7. Functionally, catalyzes the oxidation of malonate semialdehyde (MSA) and methylmalonate semialdehyde (MMSA) into acetyl-CoA and propanoyl-CoA, respectively. Is involved in a myo-inositol catabolic pathway. Bicarbonate, and not CO2, is the end-product of the enzymatic reaction. This chain is Malonate-semialdehyde dehydrogenase 2, found in Oceanobacillus iheyensis (strain DSM 14371 / CIP 107618 / JCM 11309 / KCTC 3954 / HTE831).